A 217-amino-acid chain; its full sequence is Probable transaldolase (217 aa).

The active-site Schiff-base intermediate with substrate is the Lys83.

It belongs to the transaldolase family. Type 3B subfamily.

The protein localises to the cytoplasm. The catalysed reaction is D-sedoheptulose 7-phosphate + D-glyceraldehyde 3-phosphate = D-erythrose 4-phosphate + beta-D-fructose 6-phosphate. Its pathway is carbohydrate degradation; pentose phosphate pathway; D-glyceraldehyde 3-phosphate and beta-D-fructose 6-phosphate from D-ribose 5-phosphate and D-xylulose 5-phosphate (non-oxidative stage): step 2/3. Transaldolase is important for the balance of metabolites in the pentose-phosphate pathway. The chain is Probable transaldolase from Bartonella tribocorum (strain CIP 105476 / IBS 506).